A 199-amino-acid polypeptide reads, in one-letter code: Probable GTP-binding protein EngB (199 aa).

Positions 28-199 (DIPEIALAGR…QAWDAILEQI (172 aa)) constitute an EngB-type G domain. Residues 36–43 (GRSNVGKS), 63–67 (GKTQL), 81–84 (DVPG), 148–151 (TKAD), and 180–182 (FSS) contribute to the GTP site. Mg(2+) contacts are provided by Ser-43 and Thr-65.

The protein belongs to the TRAFAC class TrmE-Era-EngA-EngB-Septin-like GTPase superfamily. EngB GTPase family. Mg(2+) serves as cofactor.

In terms of biological role, necessary for normal cell division and for the maintenance of normal septation. This chain is Probable GTP-binding protein EngB, found in Streptococcus uberis (strain ATCC BAA-854 / 0140J).